Consider the following 374-residue polypeptide: MSDKLVWIDAQGSWNGAKEKVTGALESGANAVLVSPENVERVRELGKMTVAAAEGNPDIRVIGIGSEGDGTLFLPHDLNSSEDMATAKALKAQGTTTAAYVRLAGKEYEQFAARMGKLCDYLIIEGDDWKVIPLENLIAELGGSGTKILAKARDIDEASVALQTLEKGADGVLVDVDDPLKVREIARAVSTKQAGLGLTPVTITAVRDAGTGDRVCIDTCSLMTPGEGMLIGNQSSGLFLVQSEAEESPYVASRPFRVNAGAVHEYVLVGEKTRYLSELASGDPALIVTRDGDARKATIGRVKIERRPLLYVEAETGDRKISAILQNAETIKLVAADGSSTPVTALKPGDRVLAKLEKEARHFGMKIEETIVEK.

This sequence belongs to the archaeal-type DHQ synthase family.

The catalysed reaction is 2-amino-2,3,7-trideoxy-D-lyxo-hept-6-ulosonate + NAD(+) + H2O = 3-dehydroquinate + NH4(+) + NADH + H(+). In terms of biological role, catalyzes the oxidative deamination and cyclization of 2-amino-3,7-dideoxy-D-threo-hept-6-ulosonic acid (ADH) to yield 3-dehydroquinate (DHQ), which is fed into the canonical shikimic pathway of aromatic amino acid biosynthesis. This chain is 3-dehydroquinate synthase, found in Methanocella arvoryzae (strain DSM 22066 / NBRC 105507 / MRE50).